The sequence spans 146 residues: Large ribosomal subunit protein uL15 (146 aa).

The span at 1 to 13 shows a compositional bias: basic and acidic residues; sequence MKLHELKPAEGSR. Residues 1-52 are disordered; sequence MKLHELKPAEGSRKVRNRVGRGIGSGNGKTAGKGHKGQNARSGGGVRLGFEG. Gly residues-rich tracts occupy residues 21 to 31 and 42 to 52; these read RGIGSGNGKTA and SGGGVRLGFEG.

Belongs to the universal ribosomal protein uL15 family. In terms of assembly, part of the 50S ribosomal subunit.

Binds to the 23S rRNA. In Bacillus cereus (strain B4264), this protein is Large ribosomal subunit protein uL15.